Here is a 463-residue protein sequence, read N- to C-terminus: Putative protein FAM90A2P (463 aa).

Disordered stretches follow at residues 1 to 42, 67 to 115, 150 to 295, and 326 to 365; these read MTAR…DPRL, ALVP…PQRK, MPVH…PAQA, and ALEN…PPHS. 3 stretches are compositionally biased toward basic and acidic residues: residues 74–83, 97–114, and 159–170; these read GKKEGKENLK, NKDK…DPQR, and PCVDPELADRSA. The span at 180-198 shows a compositional bias: low complexity; that stretch reads LASLSPLRKASLRSSSSLG.

The protein belongs to the FAM90 family.

The sequence is that of Putative protein FAM90A2P (FAM90A2P) from Homo sapiens (Human).